The following is a 426-amino-acid chain: MLDLKRIRNNSNEIKESLNNRGEKFDVTVIDEVLKLDEERRNILVKVEVLKSKRNQVSSEVPKLKKEGKDVSNIVAEMKNLSEEIKGFDTTLAKIDEKIQYIMLRIPNIPNPQVPDGDTDEDNIEIRNWSEPTKFDFEPKAHWDIGSNLNILDFERAGKVTGSRFTFYKGLGARLERSLISYFLDTHTEKHGYTEILPPYMVNRTSMIGTGQLPKFEEDAFKISEDDYFLIPTAEVPVTNLYRDEILKGDELPLKHVAYSACFRSEAGSAGRDTRGLVRQHQFNKVELVKFTKPEQSYEELEKLTNDAETVLKELGIPYRVVRICKGDLGFTAALKYDLEVWMPSYNRYVEISSCSNFEDFQARRANIRYKEDAKAKPQYVHTLNGSGVAIGRTVAAILENYQNEDGSVTIPEVLRPYMGGKEAIK.

Position 233–235 (233–235 (TAE)) interacts with L-serine. 264-266 (RSE) is an ATP binding site. Residue E287 coordinates L-serine. Position 351 to 354 (351 to 354 (EISS)) interacts with ATP. Position 387 (S387) interacts with L-serine.

Belongs to the class-II aminoacyl-tRNA synthetase family. Type-1 seryl-tRNA synthetase subfamily. Homodimer. The tRNA molecule binds across the dimer.

It localises to the cytoplasm. The enzyme catalyses tRNA(Ser) + L-serine + ATP = L-seryl-tRNA(Ser) + AMP + diphosphate + H(+). The catalysed reaction is tRNA(Sec) + L-serine + ATP = L-seryl-tRNA(Sec) + AMP + diphosphate + H(+). It participates in aminoacyl-tRNA biosynthesis; selenocysteinyl-tRNA(Sec) biosynthesis; L-seryl-tRNA(Sec) from L-serine and tRNA(Sec): step 1/1. In terms of biological role, catalyzes the attachment of serine to tRNA(Ser). Is also able to aminoacylate tRNA(Sec) with serine, to form the misacylated tRNA L-seryl-tRNA(Sec), which will be further converted into selenocysteinyl-tRNA(Sec). This Clostridium botulinum (strain Hall / ATCC 3502 / NCTC 13319 / Type A) protein is Serine--tRNA ligase.